The sequence spans 704 residues: MEQGLRSDGNNPPSIDKTRVLDVKPLRCLAPVFPSPNGMSSVSTPQPSPFVCVPPTGPFPPGVAPFYPFVAPNDSGRPGESSQQTPSGVPNQGGPFGFAQPISPVPLNSFRTPTTANGNSGRSRRAVDDDDYSNSQDQNDQFASGFSVHVNNVEDSGTGKKRGRPKKPRRAQQAEGLTPVEVDVEPLLTQLLTSFKLVDLDQVKKADGDKELAGRVLLVFDLFRRRMTQIDESRDGPGSGRRPDLKASNMLMTKGVRTNQTKRIGNAPGIEVGDIFFFRMELCLVGLHAPTMAGIDYMSVKLTMDEEPLAVSIVSSGGYDDDGGDGDVLIYTGQGGVQRKDGQVFDQKLERGNLALEKSVHRANEVRVIRGVKDVAYPTGKIYIYDGLYKIQESWAEKNKVGCNVFKYKLLRVPGQPEAFKVWKSIQQWKDGVASRVGVILPDLTSGAESQPVCLVNDVDDEKGPAYFTYIPSLKYSKPFVMPRPSPSCHCVGGCQPGDSNCACIQSNGGFLPYSSLGVLLSYKTLIHECGSACSCPPNCRNRMSQGGPKARLEVFKTKNRGWGLRSWDPIRGGGFICEYAGEVIDAGNYSDDNYIFDATRIYAPLEAERDYNDESRKVPFPLVISAKNGGNISRFMNHSCSPNVYWQLVVRQSNNEATYHIAFFAIRHIPPMQELTFDYGMDKADHRRKKCLCGSLNCRGYFY.

Disordered regions lie at residues 1–21 (MEQG…TRVL) and 68–176 (PFVA…QAEG). Polar residues-rich tracts occupy residues 80–90 (ESSQQTPSGVP) and 109–121 (SFRT…GNSG). Over residues 159-170 (GKKRGRPKKPRR) the composition is skewed to basic residues. The 148-residue stretch at 265–412 (GNAPGIEVGD…CNVFKYKLLR (148 aa)) folds into the YDG domain. A Pre-SET domain is found at 487–548 (PSCHCVGGCQ…NCRNRMSQGG (62 aa)). Residues C489, C491, C495, C502, C504, C530, C534, C536, and C540 each contribute to the Zn(2+) site. In terms of domain architecture, SET spans 551 to 681 (ARLEVFKTKN…PMQELTFDYG (131 aa)). Residues 561-563 (RGW), D593, Y595, R635, and 638-639 (NH) each bind S-adenosyl-L-methionine. Positions 641, 692, 694, and 699 each coordinate Zn(2+). In terms of domain architecture, Post-SET spans 688 to 704 (RRKKCLCGSLNCRGYFY).

This sequence belongs to the class V-like SAM-binding methyltransferase superfamily. Histone-lysine methyltransferase family. Suvar3-9 subfamily. In terms of assembly, interacts with LHP1. In terms of tissue distribution, expressed in roots, stems, leaves and flowers.

Its subcellular location is the nucleus. It localises to the chromosome. It carries out the reaction N(6)-methyl-L-lysyl(27)-[histone H3] + S-adenosyl-L-methionine = N(6),N(6)-dimethyl-L-lysyl(27)-[histone H3] + S-adenosyl-L-homocysteine + H(+). The catalysed reaction is L-lysyl(9)-[histone H3] + 2 S-adenosyl-L-methionine = N(6),N(6)-dimethyl-L-lysyl(9)-[histone H3] + 2 S-adenosyl-L-homocysteine + 2 H(+). It catalyses the reaction L-lysyl(27)-[histone H3] + S-adenosyl-L-methionine = N(6)-methyl-L-lysyl(27)-[histone H3] + S-adenosyl-L-homocysteine + H(+). Its function is as follows. Histone methyltransferase. Methylates in vitro both 'Lys-9' and 'Lys-27' of histone H3. Required for in vivo dimethylation of 'Lys-9'. H3 'Lys-9' methylation represents a specific tag for epigenetic control for plant development and transcriptional repression. The protein is Histone-lysine N-methyltransferase, H3 lysine-9 specific SUVH1 (SUVH1) of Nicotiana tabacum (Common tobacco).